The sequence spans 500 residues: Galactofuranose transporter ATP-binding protein YtfR (500 aa).

2 ABC transporter domains span residues 10–245 (LRTE…LGRE) and 259–497 (LSDK…IMNA). Position 42–49 (42–49 (GENGAGKS)) interacts with ATP.

This sequence belongs to the ABC transporter superfamily. As to quaternary structure, the complex is composed of two ATP-binding proteins (YtfR), two transmembrane proteins (YtfT and YjfF) and a solute-binding protein (YtfQ).

Its subcellular location is the cell inner membrane. The catalysed reaction is D-galactofuranose(out) + ATP + H2O = D-galactofuranose(in) + ADP + phosphate + H(+). Part of the ABC transporter complex YtfQRT-YjfF involved in galactofuranose transport. Responsible for energy coupling to the transport system. The chain is Galactofuranose transporter ATP-binding protein YtfR (ytfR) from Escherichia coli (strain K12).